A 417-amino-acid chain; its full sequence is MASSKLREPVDEVFDLDLAVPETTRLDSSLHKARAQLLVKGRRHRPSRSRLRDSTSSAEDGEGSDGPGGKVTDGCGSPLHRLRSPLHSGPGSPAGGSFCLEPPGLRRSLDEDEPPPSPLARYRPLHNAASHEGLAATSGSPPRSAPSSDSSPSFVRRYPRAEPHSEDDSRDASPPEPASPTIGLDKKTRRKFLDLGVTLRRASTSKSRKEKGSNRLSMGSRESVEGSGRTGGSPFLPFSWFTDSGKGSASSGSTTSPTCSPKHEGFSPKKSASQESTLSDDSTPPSSSPKIPGDPRQETKCSYPYHTLSQSSDEFLDESLPAVEHWTSQQVGQWLHSLNLEQYAAEFAARQVDGPQLLQLDGSKLKSLGLSNSHDRALVKRKLKELAAAAEKERKAQEKTARQREKLRRREHEAKKS.

Residues 37-306 are disordered; that stretch reads LLVKGRRHRP…QETKCSYPYH (270 aa). The span at 40–49 shows a compositional bias: basic residues; the sequence is KGRRHRPSRS. Residues serine 84 and serine 108 each carry the phosphoserine modification. A compositionally biased stretch (low complexity) spans 138–153; it reads SGSPPRSAPSSDSSPS. Over residues 159–173 the composition is skewed to basic and acidic residues; sequence PRAEPHSEDDSRDAS. Serine 173 and serine 179 each carry phosphoserine. Composition is skewed to low complexity over residues 244-260 and 276-289; these read SGKG…PTCS and STLS…SSSP. Serine 279 carries the phosphoserine modification. Threonine 283 carries the post-translational modification Phosphothreonine. Residues 326 to 389 form the SAM domain; that stretch reads WTSQQVGQWL…KRKLKELAAA (64 aa). A coiled-coil region spans residues 375 to 416; that stretch reads DRALVKRKLKELAAAAEKERKAQEKTARQREKLRRREHEAKK. Positions 390–417 are disordered; sequence AEKERKAQEKTARQREKLRRREHEAKKS.

The chain is Sterile alpha motif domain-containing protein 14 (Samd14) from Rattus norvegicus (Rat).